A 173-amino-acid polypeptide reads, in one-letter code: Zinc finger A20 and AN1 domain-containing stress-associated protein 2 (173 aa).

Residues 12-46 form an A20-type zinc finger; it reads PEGPKLCTNNCGFFGSAATMNMCSKCHKDMLFQQE. 12 residues coordinate Zn(2+): cysteine 18, cysteine 22, cysteine 34, cysteine 37, cysteine 114, cysteine 117, cysteine 128, cysteine 130, cysteine 135, histidine 138, histidine 144, and cysteine 146. The segment at 108 to 154 adopts an AN1-type zinc-finger fold; sequence PKGPSRCTTCNKRVGLTGFKCRCGSLFCGTHRYADVHDCSFNYHAAA.

May be involved in environmental stress response. The chain is Zinc finger A20 and AN1 domain-containing stress-associated protein 2 (SAP2) from Arabidopsis thaliana (Mouse-ear cress).